We begin with the raw amino-acid sequence, 277 residues long: 4-hydroxybenzoate octaprenyltransferase (277 aa).

8 consecutive transmembrane segments (helical) span residues 24–44 (FAAAGGIPSSSILIIFILGVI), 81–101 (VEAKVLFFVLLIIAFLLDLSL), 102–122 (NQYAFLLSFVAVALAVIYPFM), 129–149 (PQVVLGMAFGWAIPMAYGAVI), 152–172 (LPLTCWLLFLANILWTVAYDT), 201–221 (IIALLQFLSLILFILFGWLSE), 224–244 (IGYFIVLALTSTLFIYQCWLT), and 255–275 (AFLNNNYFGFGIFIAILVGIY).

The protein belongs to the UbiA prenyltransferase family. Requires Mg(2+) as cofactor.

It is found in the cell inner membrane. The catalysed reaction is all-trans-octaprenyl diphosphate + 4-hydroxybenzoate = 4-hydroxy-3-(all-trans-octaprenyl)benzoate + diphosphate. It participates in cofactor biosynthesis; ubiquinone biosynthesis. In terms of biological role, catalyzes the prenylation of para-hydroxybenzoate (PHB) with an all-trans polyprenyl group. Mediates the second step in the final reaction sequence of ubiquinone-8 (UQ-8) biosynthesis, which is the condensation of the polyisoprenoid side chain with PHB, generating the first membrane-bound Q intermediate 3-octaprenyl-4-hydroxybenzoate. The chain is 4-hydroxybenzoate octaprenyltransferase from Haemophilus ducreyi (strain 35000HP / ATCC 700724).